The sequence spans 563 residues: Tripeptidyl-peptidase 1 (563 aa).

The N-terminal stretch at 1–19 is a signal peptide; sequence MGLQACLLGLFALILSGKC. A propeptide spans 20–195 (removed in mature form); the sequence is SYSPEPDQRR…PEPQVTGTVG (176 aa). Cys111 and Cys122 are joined by a disulfide. A Peptidase S53 domain is found at 199–563; it reads GVTPSVIRKR…PALLKTLLNP (365 aa). 2 N-linked (GlcNAc...) asparagine glycosylation sites follow: Asn210 and Asn222. Catalysis depends on charge relay system residues Glu272 and Asp276. Asn286, Asn313, and Asn443 each carry an N-linked (GlcNAc...) asparagine glycan. Cystine bridges form between Cys365/Cys526 and Cys522/Cys537. Ser475 functions as the Charge relay system in the catalytic mechanism. Residues Asp517 and Val518 each contribute to the Ca(2+) site. Residues Gly539, Gly541, and Asp543 each contribute to the Ca(2+) site.

Monomer. Interacts with CLN5. Interacts with CLN3. Ca(2+) is required as a cofactor. In terms of processing, activated by autocatalytic proteolytical processing upon acidification. N-glycosylation is required for processing and activity. Detected in all tissues examined with highest levels in heart and placenta and relatively similar levels in other tissues.

Its subcellular location is the lysosome. The protein resides in the melanosome. The enzyme catalyses Release of an N-terminal tripeptide from a polypeptide, but also has endopeptidase activity.. Its activity is regulated as follows. Inhibited by diisopropyl fluorophosphate (DFP). Lysosomal serine protease with tripeptidyl-peptidase I activity. May act as a non-specific lysosomal peptidase which generates tripeptides from the breakdown products produced by lysosomal proteinases. Requires substrates with an unsubstituted N-terminus. The chain is Tripeptidyl-peptidase 1 (TPP1) from Homo sapiens (Human).